The primary structure comprises 239 residues: Lactate utilization protein A (239 aa).

The protein belongs to the LutA/YkgE family.

Is involved in L-lactate degradation and allows cells to grow with lactate as the sole carbon source. The chain is Lactate utilization protein A from Geobacillus thermodenitrificans (strain NG80-2).